The sequence spans 365 residues: Transcription factor TCP2 (365 aa).

The 59-residue stretch at 42 to 100 (GKDRHSKVLTSKGPRDRRVRLSVSTALQFYDLQDRLGYDQPSKAVEWLIKAAEDSISEL) folds into the TCP domain. The segment covering 130 to 150 (KSACSSNSDTSKNSSGLSLSR) has biased composition (low complexity). Disordered regions lie at residues 130-202 (KSAC…SAPS) and 220-245 (QTHFPISTNSHPFSSISDHHHHHPHH). The R domain maps to 151-172 (SELRDKARERARERTAKETKER). The segment covering 151–176 (SELRDKARERARERTAKETKERDHNH) has biased composition (basic and acidic residues). Over residues 177–202 (TSFTDLLNSGSDPVNSNRQWMASAPS) the composition is skewed to polar residues.

In terms of assembly, interacts with SPL. Interacts with CRY1. As to expression, expressed in cotyledons, particularly in the vascular region, in leaves, roots, buds, flowers and immature siliques.

It localises to the nucleus. Its function is as follows. Plays a pivotal role in the control of morphogenesis of shoot organs by negatively regulating the expression of boundary-specific genes such as CUC genes, probably through the induction of miRNA (e.g. miR164). Participates in ovule development. Promotes light-regulated transcription of CHS, CAB, HYH and HY5. Positively regulates photomorphogenesis (e.g. hypocotyl elongation inhibition and cotyledon opening in response to blue light). This is Transcription factor TCP2 from Arabidopsis thaliana (Mouse-ear cress).